Here is a 396-residue protein sequence, read N- to C-terminus: Elongation factor Tu (396 aa).

Positions 10–205 constitute a tr-type G domain; the sequence is KPHVNIGTIG…ACDESIPDPV (196 aa). The interval 19 to 26 is G1; that stretch reads GHVDHGKT. 19–26 lines the GTP pocket; that stretch reads GHVDHGKT. Position 26 (Thr-26) interacts with Mg(2+). Residues 62–66 form a G2 region; sequence GITIN. Positions 83–86 are G3; the sequence is DAPG. GTP-binding positions include 83–87 and 138–141; these read DAPGH and NKCD. The tract at residues 138-141 is G4; sequence NKCD. Residues 175-177 are G5; it reads SAL.

This sequence belongs to the TRAFAC class translation factor GTPase superfamily. Classic translation factor GTPase family. EF-Tu/EF-1A subfamily. In terms of assembly, monomer.

It localises to the cytoplasm. It carries out the reaction GTP + H2O = GDP + phosphate + H(+). Functionally, GTP hydrolase that promotes the GTP-dependent binding of aminoacyl-tRNA to the A-site of ribosomes during protein biosynthesis. In Corynebacterium kroppenstedtii (strain DSM 44385 / JCM 11950 / CIP 105744 / CCUG 35717), this protein is Elongation factor Tu.